The chain runs to 160 residues: SsrA-binding protein (160 aa).

This sequence belongs to the SmpB family.

The protein resides in the cytoplasm. Its function is as follows. Required for rescue of stalled ribosomes mediated by trans-translation. Binds to transfer-messenger RNA (tmRNA), required for stable association of tmRNA with ribosomes. tmRNA and SmpB together mimic tRNA shape, replacing the anticodon stem-loop with SmpB. tmRNA is encoded by the ssrA gene; the 2 termini fold to resemble tRNA(Ala) and it encodes a 'tag peptide', a short internal open reading frame. During trans-translation Ala-aminoacylated tmRNA acts like a tRNA, entering the A-site of stalled ribosomes, displacing the stalled mRNA. The ribosome then switches to translate the ORF on the tmRNA; the nascent peptide is terminated with the 'tag peptide' encoded by the tmRNA and targeted for degradation. The ribosome is freed to recommence translation, which seems to be the essential function of trans-translation. The protein is SsrA-binding protein of Actinobacillus succinogenes (strain ATCC 55618 / DSM 22257 / CCUG 43843 / 130Z).